A 423-amino-acid chain; its full sequence is Polyglutamylase complex subunit TTLL1 (423 aa).

The TTL domain maps to 1-367 (MAGRVKWVTD…NGEIPDCKWN (367 aa)). ATP is bound by residues lysine 138, 144-145 (QG), 181-184 (SLYI), and 194-196 (KFD). Glutamine 144 contacts a protein. Arginine 220 contacts L-glutamate. 241-242 (TN) contacts ATP. Lysine 259 serves as a coordination point for L-glutamate. Residues aspartate 313, glutamate 326, and asparagine 328 each coordinate Mg(2+). Lysine 344 contacts L-glutamate. A disordered region spans residues 390–423 (DGAERELRSRPGQPVGPRTGRSRDSGRNVLTTWK).

Belongs to the tubulin polyglutamylase family. Part of the neuronal tubulin polyglutamylase complex which contains TPGS1, TPGS2, TTLL1, LRRC49 and NICN1. Interacts with PCM1, CSTPP1 and LRRC49. It depends on Mg(2+) as a cofactor.

The protein resides in the cytoplasm. It is found in the cytoskeleton. Its subcellular location is the cilium basal body. It localises to the cilium axoneme. The protein localises to the cell projection. The protein resides in the cilium. It is found in the flagellum. It carries out the reaction (L-glutamyl)(n)-gamma-L-glutamyl-L-glutamyl-[protein] + L-glutamate + ATP = (L-glutamyl)(n+1)-gamma-L-glutamyl-L-glutamyl-[protein] + ADP + phosphate + H(+). In terms of biological role, catalytic subunit of a polyglutamylase complex which modifies tubulin, generating side chains of glutamate on the gamma-carboxyl group of specific glutamate residues within the C-terminal tail of tubulin. Probably involved in the side-chain elongation step of the polyglutamylation reaction rather than the initiation step. Modifies both alpha- and beta-tubulins with a preference for the alpha-tail. Unlike most polyglutamylases of the tubulin--tyrosine ligase family, only displays a catalytic activity when in complex with other proteins as it is most likely lacking domains important for autonomous activity. Part of the neuronal tubulin polyglutamylase complex. Mediates cilia and flagella polyglutamylation which is essential for their biogenesis and motility. Involved in respiratory motile cilia function through the regulation of beating asymmetry. Essential for sperm flagella biogenesis, motility and male fertility. Involved in KLF4 glutamylation which impedes its ubiquitination, thereby leading to somatic cell reprogramming, pluripotency maintenance and embryogenesis. This chain is Polyglutamylase complex subunit TTLL1 (Ttll1), found in Rattus norvegicus (Rat).